The chain runs to 422 residues: Enolase (422 aa).

Glutamine 162 contacts (2R)-2-phosphoglycerate. Glutamate 204 acts as the Proton donor in catalysis. Mg(2+)-binding residues include aspartate 241, glutamate 284, and aspartate 311. Lysine 336, arginine 365, serine 366, and lysine 387 together coordinate (2R)-2-phosphoglycerate. Lysine 336 functions as the Proton acceptor in the catalytic mechanism.

This sequence belongs to the enolase family. Mg(2+) serves as cofactor.

The protein resides in the cytoplasm. The protein localises to the secreted. It localises to the cell surface. The catalysed reaction is (2R)-2-phosphoglycerate = phosphoenolpyruvate + H2O. Its pathway is carbohydrate degradation; glycolysis; pyruvate from D-glyceraldehyde 3-phosphate: step 4/5. In terms of biological role, catalyzes the reversible conversion of 2-phosphoglycerate (2-PG) into phosphoenolpyruvate (PEP). It is essential for the degradation of carbohydrates via glycolysis. The sequence is that of Enolase from Bartonella quintana (strain Toulouse) (Rochalimaea quintana).